The sequence spans 485 residues: Probable cytosol aminopeptidase (485 aa).

Mn(2+) contacts are provided by lysine 251 and aspartate 256. Lysine 263 is a catalytic residue. Positions 274, 333, and 335 each coordinate Mn(2+). Arginine 337 is an active-site residue.

This sequence belongs to the peptidase M17 family. Mn(2+) serves as cofactor.

Its subcellular location is the cytoplasm. The enzyme catalyses Release of an N-terminal amino acid, Xaa-|-Yaa-, in which Xaa is preferably Leu, but may be other amino acids including Pro although not Arg or Lys, and Yaa may be Pro. Amino acid amides and methyl esters are also readily hydrolyzed, but rates on arylamides are exceedingly low.. It carries out the reaction Release of an N-terminal amino acid, preferentially leucine, but not glutamic or aspartic acids.. Presumably involved in the processing and regular turnover of intracellular proteins. Catalyzes the removal of unsubstituted N-terminal amino acids from various peptides. This is Probable cytosol aminopeptidase from Brucella melitensis biotype 1 (strain ATCC 23456 / CCUG 17765 / NCTC 10094 / 16M).